The sequence spans 373 residues: MRAKIPSEEVAVKLNEWYKLIRAFEADQAEALKQEIEYDLEDMEENQDLLLYFSLMEFRHRIMLDKLMPVKDSDTKPPFSDMLNEIESNQQKLTGLLEYYFYYFRGMYEFKQKNFILAIDHYKHAEEKLEYVEDEIEKAEFLFKVAEVYYHIKQTYFSMNYASQALDIYTKYELYGRRRVQCEFIIAGNLTDVYHHEKALTHLCSALEHARQLEEAYMIAAAYYNVGHCKYSLGDYKEAEGYFKTAAAIFEEHNFQQAVQAVFSLTHIYCKEGKYDKAVEAYDRGIKSAAEWEDDMYLTKFRLIHELYLGSGDLNVLTECFDLLESRQLLADAEDLLHDTAERFNQLEHYESAAFFYRRLMNIKKKLAEQRFQ.

TPR repeat units follow at residues 99–135 (YYFY…VEDE) and 146–179 (AEVY…GRRR). L-glutamyl-L-arginyl-glycyl-L-methionyl-L-threonine-binding residues include Glu147, Tyr150, Gln181, Asp192, Tyr217, Asn225, His228, Gln260, Tyr297, Lys300, and Asp335. TPR repeat units lie at residues 220 to 253 (AAAY…FEEH) and 259 to 292 (VQAV…AAEW). The TPR 5 repeat unit spans residues 334–367 (EDLLHDTAERFNQLEHYESAAFFYRRLMNIKKKL).

The protein belongs to the Rap family. Monomer in solution. Homodimer.

It localises to the cytoplasm. Its activity is regulated as follows. Inhibited in vitro by the competence and sporulation stimulating factor (CSF), encoded by phrC. However, CSF has at least three targets (RapB, RapC, and RapJ) and the physiological importance of RapJ inhibition by CSF is unknown. Interaction with CSF induces a conformational change in RapJ. Its function is as follows. Involved in the regulation of sporulation. Acts as a phosphatase that specifically dephosphorylates the sporulation initiation phosphotransferase Spo0F and inhibits its activity. This is Response regulator aspartate phosphatase J (rapJ) from Bacillus subtilis (strain 168).